The primary structure comprises 288 residues: Serine/threonine-protein acetyltransferase YopJ (288 aa).

Active-site residues include His-109 and Glu-128. His-109 lines the CoA pocket. Residue 167-168 coordinates CoA; that stretch reads RS. The active site involves Cys-172. 1D-myo-inositol hexakisphosphate-binding positions include 182–185 and 224–225; these read KLYI and KH. Position 227 to 230 (227 to 230) interacts with CoA; sequence QGKK. Residue Arg-257 coordinates 1D-myo-inositol hexakisphosphate. CoA is bound at residue 266–270; that stretch reads DGKEL.

The protein belongs to the acetyltransferase YopJ family. It depends on 1D-myo-inositol hexakisphosphate as a cofactor.

It is found in the secreted. The catalysed reaction is L-threonyl-[protein] + acetyl-CoA = O-acetyl-L-threonyl-[protein] + CoA. It carries out the reaction L-seryl-[protein] + acetyl-CoA = O-acetyl-L-seryl-[protein] + CoA. With respect to regulation, 1D-myo-inositol hexakisphosphate activates protein-acetyltransferase activity via an allosteric mechanism: 1D-myo-inositol hexakisphosphate-binding induces a conformational rearrangement that stimulates the interaction with acetyl-CoA. In terms of biological role, serine/threonine-protein acetyltransferase translocated into infected cells, which inhibits the host immune response and induces cell death by mediating acetylation of target proteins. Inhibits the MAPK and NF-kappa-B signaling pathways by acetylating protein-kinases such as MAP2K1, MAP2K6, MAP3K7/TAK1 and I-kappa-B kinase (CHUK/IKKA and IKBKB) on serine and threonine residues critical for their activation by phosphorylation, thereby preventing protein-kinase activation. Promotes pyroptosis, a programmed cell death, in host cells by mediating acetylation of MAP3K7/TAK1: MAP3K7/TAK1 inactivation triggers activation of caspase-8 (CASP8), followed by CASP8-dependent cleavage of gasdermin-D (GSDMD) and induction of pyroptosis. This is Serine/threonine-protein acetyltransferase YopJ from Yersinia pestis.